We begin with the raw amino-acid sequence, 258 residues long: F-box/SPRY domain-containing protein 1 (258 aa).

The region spanning 6 to 54 (TEYAPDIPDNVLELIFSYLKLQDLRNCALVCKSWHRFLSDENNEVWRAQ) is the F-box domain. The 193-residue stretch at 64 to 256 (FKTDLLSVVP…ISMVYLGPPL (193 aa)) folds into the B30.2/SPRY domain.

Belongs to the FBXO45/Fsn family. Component of an E3 ubiquitin ligase complex composed of hiw and Fsn.

The protein resides in the synapse. It participates in protein modification; protein ubiquitination. Required in the presynaptic motoneuron to down-regulate the levels of wnd and restrain synaptic terminal growth at the neuromuscular junction (NMJ). This Culex quinquefasciatus (Southern house mosquito) protein is F-box/SPRY domain-containing protein 1.